Here is a 158-residue protein sequence, read N- to C-terminus: uncharacterized protein (158 aa).

The HTH asnC-type domain occupies leucine 12–glutamate 73. Positions tyrosine 31–asparagine 50 form a DNA-binding region, H-T-H motif.

This is an uncharacterized protein from Pyrococcus horikoshii (strain ATCC 700860 / DSM 12428 / JCM 9974 / NBRC 100139 / OT-3).